The primary structure comprises 162 residues: Peptidyl-prolyl cis-trans isomerase (162 aa).

N-acetylserine is present on serine 2. The PPIase cyclophilin-type domain occupies 5 to 161; that stretch reads YFDVEADGQP…ARIVVAKSGE (157 aa). Residues lysine 29 and lysine 42 each participate in a glycyl lysine isopeptide (Lys-Gly) (interchain with G-Cter in ubiquitin) cross-link. Phosphothreonine is present on threonine 71. Glycyl lysine isopeptide (Lys-Gly) (interchain with G-Cter in ubiquitin) cross-links involve residues lysine 123 and lysine 139. Phosphoserine is present on residues serine 142 and serine 145. Residues lysine 151 and lysine 158 each participate in a glycyl lysine isopeptide (Lys-Gly) (interchain with G-Cter in ubiquitin) cross-link.

It belongs to the cyclophilin-type PPIase family. PPIase A subfamily. Interacts with a complex composed of SIN3 and RPD3. Identified in the Set3C complex with HOS2, HST1, SNT1, SIF2, HOS4/YIL112W and SET3.

It localises to the cytoplasm. The protein localises to the nucleus. Its subcellular location is the mitochondrion intermembrane space. It catalyses the reaction [protein]-peptidylproline (omega=180) = [protein]-peptidylproline (omega=0). Its activity is regulated as follows. Binds cyclosporin A (CsA). CsA mediates some of its effects via an inhibitory action on PPIase. PPIases accelerate the folding of proteins. It catalyzes the cis-trans isomerization of proline imidic peptide bonds in oligopeptides. Involved in histone deacetylase complexes, suggesting a function in chromatin. Imports fructose-1,6-bisphosphatase (FBPase) into the intermediate vacuole import and degradation (Vid) vesicles. Regulates the meiotic gene program via the Set3C histone deacetylase complex to promote efficient sporulation, and the prolyl-isomerase activity is required for this function. The sequence is that of Peptidyl-prolyl cis-trans isomerase (CPR1) from Saccharomyces cerevisiae (strain ATCC 204508 / S288c) (Baker's yeast).